A 160-amino-acid chain; its full sequence is Cytochrome b6-f complex subunit 4 (160 aa).

3 consecutive transmembrane segments (helical) span residues 36 to 56 (LLYI…GLAV), 95 to 115 (LLGI…PFIE), and 128 to 148 (IAMS…IGAC).

This sequence belongs to the cytochrome b family. PetD subfamily. In terms of assembly, the 4 large subunits of the cytochrome b6-f complex are cytochrome b6, subunit IV (17 kDa polypeptide, PetD), cytochrome f and the Rieske protein, while the 4 small subunits are PetG, PetL, PetM and PetN. The complex functions as a dimer.

The protein localises to the cellular thylakoid membrane. Functionally, component of the cytochrome b6-f complex, which mediates electron transfer between photosystem II (PSII) and photosystem I (PSI), cyclic electron flow around PSI, and state transitions. This is Cytochrome b6-f complex subunit 4 from Prochlorococcus marinus (strain MIT 9301).